Consider the following 593-residue polypeptide: ATPase family AAA domain-containing protein 3-B (593 aa).

Disordered stretches follow at residues 1–64, 109–129, and 145–164; these read MSWL…LDQS, EEKRKTLNEETKQHQARAQYQ, and QLQNEENLRRQEESVQKQEA. Residues 1–242 are Mitochondrial intermembrane-facing; that stretch reads MSWLFGLNRG…FRTFISDWDK (242 aa). A compositionally biased stretch (pro residues) spans 12–27; that stretch reads PEPPGVPGFPEPPSPP. 4 stretches are compositionally biased toward basic and acidic residues: residues 33–44, 53–64, 109–121, and 150–164; these read GGDKNRPKDKWS, RAAKAARELDQS, EEKRKTLNEETKQ, and ENLRRQEESVQKQEA. A coiled-coil region spans residues 51–215; sequence LERAAKAARE…QIRLKAAEHR (165 aa). Residues 243–260 traverse the membrane as a helical segment; it reads VTATVAGLTLLAVGVYTA. Residues 261 to 593 are Mitochondrial matrix-facing; sequence KNGTGVAGRY…LQPLLEGTPV (333 aa). 348-355 is a binding site for ATP; the sequence is GPPGTGKT. Over residues 570–580 the composition is skewed to basic and acidic residues; that stretch reads AEGKESTKEIG. Residues 570–593 form a disordered region; the sequence is AEGKESTKEIGKNPLQPLLEGTPV.

Belongs to the AAA ATPase family. As to quaternary structure, can form homooligomers. Homodimer formation at the N-terminus may be regulated by ATP and is required for the interaction with the inner surface of the mitochondrial outer membrane and correct mitochondrial homeostasis.

It localises to the mitochondrion inner membrane. The protein resides in the mitochondrion matrix. The protein localises to the mitochondrion nucleoid. It catalyses the reaction ATP + H2O = ADP + phosphate + H(+). Essential for mitochondrial network organization, mitochondrial metabolism and cell growth at organism and cellular level. May play an important role in mitochondrial protein synthesis. May also participate in mitochondrial DNA replication. May bind to mitochondrial DNA D-loops and contribute to nucleoid stability. Required for enhanced channeling of cholesterol for hormone-dependent steroidogenesis. Involved in mitochondrial-mediated antiviral innate immunity. Required to protect mitochondria from the PERK-mediated unfolded protein response: specifically inhibits the activity of EIF2AK3/PERK at mitochondria-endoplasmic reticulum contact sites, thereby providing a safe haven for mitochondrial protein translation during endoplasmic reticulum stress. Ability to inhibit EIF2AK3/PERK is independent of its ATPase activity. Also involved in the mitochondrial DNA damage response by promoting signaling between damaged genomes and the mitochondrial membrane, leading to activation of the integrated stress response (ISR). The sequence is that of ATPase family AAA domain-containing protein 3-B (atad3-b) from Xenopus laevis (African clawed frog).